The chain runs to 343 residues: Sodium/bile acid cotransporter 7-B (343 aa).

At 1–9 (MGLLERLRK) the chain is on the cytoplasmic side. Residues 10–30 (EWFIIGIILVIVAAKLEPTIG) traverse the membrane as a helical segment. The Extracellular portion of the chain corresponds to 31-37 (EKGGPLK). A helical transmembrane segment spans residues 38 to 58 (PEITITYIAVSAIFFNSGLSL). Residues 59-71 (KTEELTNALMHVK) are Cytoplasmic-facing. A helical membrane pass occupies residues 72–92 (LHLFVQLFTLVFFPTAIWIFL). Topologically, residues 93 to 116 (QVLSLTPINEWLLKGLQTVSCMPP) are extracellular. Residues 117–137 (PVSSAVILTKAVGGNEAAAIF) traverse the membrane as a helical segment. Residue N138 is a topological domain, cytoplasmic. A helical membrane pass occupies residues 139–159 (SAFGSFLGIVVTPLLLLLFLG). Residues 160 to 163 (SSSS) are Extracellular-facing. The helical transmembrane segment at 164–184 (VPFTSIFSQLFMTVVVPLIIG) threads the bilayer. The Cytoplasmic segment spans residues 185 to 201 (QIVRRYIKDWLERKKPP). A helical transmembrane segment spans residues 202–222 (FGAISSCVLLMIIYTTFCDTF). Residues 223–234 (SNPNIDLDTFSL) lie on the Extracellular side of the membrane. A helical membrane pass occupies residues 235–255 (VVIVFIIFFIQLAFMLLTFLF). The Cytoplasmic segment spans residues 256–270 (STSKNSGFTPADTVA). A helical transmembrane segment spans residues 271-291 (IVFCSTHKSLTLGIPMLKIVF). The Extracellular segment spans residues 292–298 (AGYEHLS). The helical transmembrane segment at 299–319 (LISVPLLIYHPAQILLGSVLV) threads the bilayer. The Cytoplasmic portion of the chain corresponds to 320–343 (PTIKSWMLSRRKALKLTRQPKIPL).

This sequence belongs to the bile acid:sodium symporter (BASS) (TC 2.A.28) family.

The protein localises to the cell membrane. It is found in the endoplasmic reticulum membrane. It localises to the golgi apparatus membrane. Involved in teeth and skeletal development. Has an essential role in the biosynthesis and trafficking of glycosaminoglycans and glycoproteins to produce a proper functioning extracellular matrix. Required for extracellular matrix mineralization. Also involved in the regulation of cellular calcium homeostasis. Does not show transport activity towards bile acids or steroid sulfates. The chain is Sodium/bile acid cotransporter 7-B (slc10a7-b) from Xenopus laevis (African clawed frog).